The sequence spans 395 residues: Elongation factor Tu (395 aa).

One can recognise a tr-type G domain in the interval 10 to 204; it reads KPHVNIGTIG…TVDEYIPTPQ (195 aa). A G1 region spans residues 19-26; the sequence is GHVDHGKT. 19 to 26 contacts GTP; that stretch reads GHVDHGKT. A Mg(2+)-binding site is contributed by threonine 26. The tract at residues 60-64 is G2; sequence GITIN. The interval 81–84 is G3; it reads DAPG. Residues 81-85 and 136-139 contribute to the GTP site; these read DAPGH and NKCD. A G4 region spans residues 136–139; sequence NKCD. A G5 region spans residues 174–176; the sequence is SAL.

The protein belongs to the TRAFAC class translation factor GTPase superfamily. Classic translation factor GTPase family. EF-Tu/EF-1A subfamily. In terms of assembly, monomer.

The protein resides in the cytoplasm. The enzyme catalyses GTP + H2O = GDP + phosphate + H(+). Functionally, GTP hydrolase that promotes the GTP-dependent binding of aminoacyl-tRNA to the A-site of ribosomes during protein biosynthesis. This is Elongation factor Tu from Ligilactobacillus salivarius (strain UCC118) (Lactobacillus salivarius).